Here is a 1162-residue protein sequence, read N- to C-terminus: Lysine-specific demethylase 2A (1162 aa).

A Phosphoserine modification is found at S28. Residues 148 to 316 (FSHTRLENMV…MQLKIYNIED (169 aa)) form the JmjC domain. T209 contacts substrate. Residues H212 and D214 each coordinate Fe cation. Position 229 (K229) interacts with substrate. H284 lines the Fe cation pocket. The segment at 367-389 (GLESGNGDEEAVDREPRRLSSRR) is disordered. Phosphoserine occurs at positions 390 and 394. K505 is covalently cross-linked (Glycyl lysine isopeptide (Lys-Gly) (interchain with G-Cter in SUMO2)). Residues 532-557 (VPTIPITKPHTMKPAPRLTPVRPAAA) are disordered. T550 bears the Phosphothreonine mark. S558 bears the Phosphoserine mark. The segment at 564–610 (ARRRRVRCRKCKACVQGECGVCHYCRDMKKFGGPGRMKQSCVLRQCL) adopts a CXXC-type zinc-finger fold. C571, C574, C577, C582, C585, C588, C604, C609, C620, and C623 together coordinate Zn(2+). The segment at 617 to 678 (SVTCSLCGEV…CWECPKCYQE (62 aa)) adopts a PHD-type zinc-finger fold. T632 is subject to Phosphothreonine. Positions 642, 645, 650, 653, 672, and 675 each coordinate Zn(2+). S692 is modified (phosphoserine). The tract at residues 704 to 789 (PLRSCDEPLT…PSGKKELSEV (86 aa)) is disordered. Position 713 is a phosphothreonine (T713). Residues S718 and S731 each carry the phosphoserine modification. Composition is skewed to basic and acidic residues over residues 746–757 (SDHHSASRDERF) and 771–789 (TMVR…LSEV). Phosphoserine is present on residues S825, S832, S869, and S883. A disordered region spans residues 839-887 (HCPARTPQRGDEEGLGGEEEEEEEEEEEDDSAEEGGAARLNGRGSWAQD). A compositionally biased stretch (acidic residues) spans 851 to 871 (EGLGGEEEEEEEEEEEDDSAE). The F-box domain occupies 889–936 (DESWMQREVWMSVFRYLSRRELCECMRVCKTWYKWCCDKRLWTKIDLS). LRR repeat units follow at residues 961 to 982 (WTNI…LKDL) and 984 to 1010 (LAGC…DLRW). R1020 bears the ADP-ribosylarginine mark. 4 LRR repeats span residues 1048–1073 (GLDI…DLSH), 1074–1103 (CSHL…NMAG), 1104–1128 (CNKL…DLRG), and 1129–1156 (CKQI…SDEK).

The protein belongs to the JHDM1 histone demethylase family. Interacts with CBX5/HP1A; the interaction promotes CBX5 localization to chromatin. The SKP1-KDM2A complex interacts with UBB. Part of a SCF (SKP1-cullin-F-box) protein ligase complex. Fe(2+) serves as cofactor. Post-translationally, mono-ADP-ribosylated at Arg-1020 in response to DNA damage, leading to displacement from chromatin, resulting in increased dimethylation of histone H3 at 'Lys-36'. As to expression, widely expressed, with highest levels in brain, testis and ovary, followed by lung.

It localises to the nucleus. Its subcellular location is the nucleoplasm. The protein localises to the chromosome. It carries out the reaction N(6),N(6)-dimethyl-L-lysyl(36)-[histone H3] + 2 2-oxoglutarate + 2 O2 = L-lysyl(36)-[histone H3] + 2 formaldehyde + 2 succinate + 2 CO2. In terms of biological role, histone demethylase that specifically demethylates 'Lys-36' of histone H3, thereby playing a central role in histone code. Preferentially demethylates dimethylated H3 'Lys-36' residue while it has weak or no activity for mono- and tri-methylated H3 'Lys-36'. May also recognize and bind to some phosphorylated proteins and promote their ubiquitination and degradation. Required to maintain the heterochromatic state. Associates with centromeres and represses transcription of small non-coding RNAs that are encoded by the clusters of satellite repeats at the centromere. Required to sustain centromeric integrity and genomic stability, particularly during mitosis. Regulates circadian gene expression by repressing the transcriptional activator activity of CLOCK-BMAL1 heterodimer and RORA in a catalytically-independent manner. The sequence is that of Lysine-specific demethylase 2A (KDM2A) from Homo sapiens (Human).